Here is a 249-residue protein sequence, read N- to C-terminus: Tryptophan synthase alpha chain (249 aa).

Catalysis depends on proton acceptor residues E43 and D54.

Belongs to the TrpA family. Tetramer of two alpha and two beta chains.

It carries out the reaction (1S,2R)-1-C-(indol-3-yl)glycerol 3-phosphate + L-serine = D-glyceraldehyde 3-phosphate + L-tryptophan + H2O. It functions in the pathway amino-acid biosynthesis; L-tryptophan biosynthesis; L-tryptophan from chorismate: step 5/5. The alpha subunit is responsible for the aldol cleavage of indoleglycerol phosphate to indole and glyceraldehyde 3-phosphate. The protein is Tryptophan synthase alpha chain of Campylobacter jejuni subsp. jejuni serotype O:23/36 (strain 81-176).